We begin with the raw amino-acid sequence, 337 residues long: DNA-directed RNA polymerase subunit alpha (337 aa).

The tract at residues 1–233 is alpha N-terminal domain (alpha-NTD); the sequence is MIQKNWQELI…DQLSLFVNFE (233 aa). The tract at residues 249–337 is alpha C-terminal domain (alpha-CTD); that stretch reads FNPALLKKVD…DLAKRYEDQY (89 aa).

This sequence belongs to the RNA polymerase alpha chain family. Homodimer. The RNAP catalytic core consists of 2 alpha, 1 beta, 1 beta' and 1 omega subunit. When a sigma factor is associated with the core the holoenzyme is formed, which can initiate transcription.

It catalyses the reaction RNA(n) + a ribonucleoside 5'-triphosphate = RNA(n+1) + diphosphate. In terms of biological role, DNA-dependent RNA polymerase catalyzes the transcription of DNA into RNA using the four ribonucleoside triphosphates as substrates. In Bartonella quintana (strain Toulouse) (Rochalimaea quintana), this protein is DNA-directed RNA polymerase subunit alpha.